Consider the following 103-residue polypeptide: Transcription factor S (103 aa).

The Zn(2+) site is built by cysteine 4, cysteine 7, cysteine 20, cysteine 23, cysteine 64, cysteine 67, cysteine 92, and cysteine 95. Residues 4 to 23 (CPKCKSLMIYQGDKLVCRKC) form a C4-type zinc finger. The TFIIS-type zinc finger occupies 60–100 (TKAICPACGHNEAFWWLRQLRAADESEVRFFRCTKCGKTWR).

The protein belongs to the archaeal RpoM/eukaryotic RPA12/RPB9/RPC11 RNA polymerase family.

In terms of biological role, induces RNA cleavage activity in the RNA polymerase. In its presence, the cleavage activity of the RNA polymerase truncates the RNA back to position +15 in a stepwise manner by releasing mainly dinucleotides from the 3'-end of the nascent RNA. The truncated RNAs are able to continue elongation. Involved in transcriptional proofreading and fidelity. Misincorporation of nucleotides during elongation of transcription leads to arrested elongation complexes which are rescued by TFS-promoted removal of a dinucleotide from the 3'-end. TFS is able to induce a cleavage resynthesis cycle in stalled elongation complexes (resulting from the next missing nucleotide or a reduced incorporation rate of a wrong nucleotide) preventing misincorporation and enabling proofreading in a post-incorporation manner. Pausing of elongation complexes is the main determinant of TFS-induced RNA cleavage. This is Transcription factor S from Archaeoglobus fulgidus (strain ATCC 49558 / DSM 4304 / JCM 9628 / NBRC 100126 / VC-16).